Here is a 454-residue protein sequence, read N- to C-terminus: Bifunctional protein GlmU (454 aa).

Residues 1–226 (MSLEIVILAA…AMEVQGVNDR (226 aa)) form a pyrophosphorylase region. UDP-N-acetyl-alpha-D-glucosamine contacts are provided by residues 8–11 (LAAG), K22, Q73, 78–79 (GT), 99–101 (YGD), G136, E151, N166, and N224. D101 serves as a coordination point for Mg(2+). N224 is a binding site for Mg(2+). The linker stretch occupies residues 227–247 (MQQAQLERHYQRLRAEELMRQ). Residues 248–454 (GVTLLDPQRL…NWKRPEKIKK (207 aa)) form an N-acetyltransferase region. Residues R330 and K348 each coordinate UDP-N-acetyl-alpha-D-glucosamine. The Proton acceptor role is filled by H360. Residues Y363 and N374 each coordinate UDP-N-acetyl-alpha-D-glucosamine. Residues A377, 383–384 (NY), S402, A420, and R437 each bind acetyl-CoA.

This sequence in the N-terminal section; belongs to the N-acetylglucosamine-1-phosphate uridyltransferase family. In the C-terminal section; belongs to the transferase hexapeptide repeat family. Homotrimer. The cofactor is Mg(2+).

It localises to the cytoplasm. The enzyme catalyses alpha-D-glucosamine 1-phosphate + acetyl-CoA = N-acetyl-alpha-D-glucosamine 1-phosphate + CoA + H(+). The catalysed reaction is N-acetyl-alpha-D-glucosamine 1-phosphate + UTP + H(+) = UDP-N-acetyl-alpha-D-glucosamine + diphosphate. It participates in nucleotide-sugar biosynthesis; UDP-N-acetyl-alpha-D-glucosamine biosynthesis; N-acetyl-alpha-D-glucosamine 1-phosphate from alpha-D-glucosamine 6-phosphate (route II): step 2/2. Its pathway is nucleotide-sugar biosynthesis; UDP-N-acetyl-alpha-D-glucosamine biosynthesis; UDP-N-acetyl-alpha-D-glucosamine from N-acetyl-alpha-D-glucosamine 1-phosphate: step 1/1. It functions in the pathway bacterial outer membrane biogenesis; LPS lipid A biosynthesis. Its function is as follows. Catalyzes the last two sequential reactions in the de novo biosynthetic pathway for UDP-N-acetylglucosamine (UDP-GlcNAc). The C-terminal domain catalyzes the transfer of acetyl group from acetyl coenzyme A to glucosamine-1-phosphate (GlcN-1-P) to produce N-acetylglucosamine-1-phosphate (GlcNAc-1-P), which is converted into UDP-GlcNAc by the transfer of uridine 5-monophosphate (from uridine 5-triphosphate), a reaction catalyzed by the N-terminal domain. The protein is Bifunctional protein GlmU of Pseudomonas aeruginosa (strain ATCC 15692 / DSM 22644 / CIP 104116 / JCM 14847 / LMG 12228 / 1C / PRS 101 / PAO1).